The following is a 646-amino-acid chain: 1-deoxy-D-xylulose-5-phosphate synthase (646 aa).

Residues His86 and 127–129 contribute to the thiamine diphosphate site; that span reads AHS. Asp158 lines the Mg(2+) pocket. Thiamine diphosphate-binding positions include 159–160, Asn188, Tyr295, and Glu377; that span reads GA. Asn188 serves as a coordination point for Mg(2+).

It belongs to the transketolase family. DXPS subfamily. In terms of assembly, homodimer. Requires Mg(2+) as cofactor. Thiamine diphosphate is required as a cofactor.

The catalysed reaction is D-glyceraldehyde 3-phosphate + pyruvate + H(+) = 1-deoxy-D-xylulose 5-phosphate + CO2. It participates in metabolic intermediate biosynthesis; 1-deoxy-D-xylulose 5-phosphate biosynthesis; 1-deoxy-D-xylulose 5-phosphate from D-glyceraldehyde 3-phosphate and pyruvate: step 1/1. In terms of biological role, catalyzes the acyloin condensation reaction between C atoms 2 and 3 of pyruvate and glyceraldehyde 3-phosphate to yield 1-deoxy-D-xylulose-5-phosphate (DXP). The protein is 1-deoxy-D-xylulose-5-phosphate synthase of Burkholderia ambifaria (strain ATCC BAA-244 / DSM 16087 / CCUG 44356 / LMG 19182 / AMMD) (Burkholderia cepacia (strain AMMD)).